Reading from the N-terminus, the 392-residue chain is Ribosomal RNA large subunit methyltransferase G (392 aa).

It belongs to the methyltransferase superfamily. RlmG family.

It localises to the cytoplasm. The catalysed reaction is guanosine(1835) in 23S rRNA + S-adenosyl-L-methionine = N(2)-methylguanosine(1835) in 23S rRNA + S-adenosyl-L-homocysteine + H(+). Functionally, specifically methylates the guanine in position 1835 (m2G1835) of 23S rRNA. This chain is Ribosomal RNA large subunit methyltransferase G, found in Colwellia psychrerythraea (strain 34H / ATCC BAA-681) (Vibrio psychroerythus).